The primary structure comprises 955 residues: Serine-aspartate repeat-containing protein C (955 aa).

Residues 1-50 (MNNKKTVTNRKGMIPNRLNKFSIRKYSVGTASILVGTTLIFGLSGHEAKA) form the signal peptide. Residues 51 to 166 (AEHTNGELNQ…TPKTTTIKPR (116 aa)) are disordered. Residues 51-495 (AEHTNGELNQ…GSSTANGDQK (445 aa)) form a ligand binding A region region. The segment covering 56–71 (GELNQSKNETTAPSEN) has biased composition (polar residues). Positions 72-83 (KTTEKVDSHQLK) are enriched in basic and acidic residues. A compositionally biased stretch (polar residues) spans 84–114 (DNTQTATADQPKVTMSDSATFKETSSNMQSP). A compositionally biased stretch (low complexity) spans 115-132 (QNATASQSTTQTSNVTTN). The span at 133–164 (DKSSTTYSNETDKSNLTQAKDVSATPKTTTIK) shows a compositional bias: polar residues. 2 CNA-B domains span residues 496–606 (KYNL…YKTP) and 607–717 (KYSL…EEET). Positions 678–935 (TQTGTNTTED…NNSNNGTLFG (258 aa)) are disordered. Composition is skewed to acidic residues over residues 685-695 (TEDDKDADGGE) and 712-894 (YYEE…DSDS). The LPXTG sorting signal signature appears at 918–922 (LPETG). The span at 920–935 (ETGSENNNSNNGTLFG) shows a compositional bias: low complexity. Threonine 921 bears the Pentaglycyl murein peptidoglycan amidated threonine mark. The propeptide at 922-955 (GSENNNSNNGTLFGGLFAALGSLLLFGRRKKQNK) is removed by sortase.

Belongs to the serine-aspartate repeat-containing protein (SDr) family. Homodimerizes; via N2-Domain. Interacts with host NRXN1; this interaction mediates bacterial attachment to host cells.

The protein localises to the secreted. It is found in the cell wall. Cell surface-associated calcium-binding protein which plays an important role in adhesion and pathogenesis. Mediates interactions with components of the extracellular matrix such as host NRXN1 to promote bacterial adhesion. The protein is Serine-aspartate repeat-containing protein C (sdrC) of Staphylococcus aureus (strain MW2).